The sequence spans 146 residues: Hemoglobin subunit beta (146 aa).

The Globin domain maps to 2–146 (HWSAEEKQLI…VAHALARKYH (145 aa)). Residues His63 and His92 each contribute to the heme b site.

This sequence belongs to the globin family. Heterotetramer of two alpha chains and two beta chains. In terms of tissue distribution, red blood cells.

Involved in oxygen transport from the lung to the various peripheral tissues. This Phasianus colchicus colchicus (Black-necked pheasant) protein is Hemoglobin subunit beta (HBB).